A 581-amino-acid polypeptide reads, in one-letter code: MSLLVVGLSHRSAPVSVLERASLNADAQLKLLQDTVAAEPAAEAAVLATCNRIELYADVDKFHAGVAELSTLLAQHSGVGLEELTPYLYVHYEDRAVHHLFSVACGLDSMVVGEGQILGQIKDSLARAQDLHTAGRLLNDLFQQALRVGKRAHSETGIDRAGQSLVTFGLEQLSAGADVEQWARGKKALVIGAGSMSSLAAATLARAGVAEIVVANRTFERAERLALLLEEQYGQRLSEGDDTDVLARAVPMDAVPGELTRADVAVSCTGATGLVLTADSVAATVEGRTGAPAVEDTAVQETAVREAGETPLPGAGSAADENCPLDLSSVSSVPSGFSVMGEAAVAGMDAATLEQHGAWAAGGTAVDRTREAGRSGPEADAELIGALAATATRVGRIPERRRPEPVAEAPRPQPVLFLLDLAMPRDVDAAVHRLAGVRLVDIESLADASADAPMAADVDMVRRIVADEVAAFGAAQRAAHITPTVVALRSMAADVVAGEIARLEGRLPGLDDKHRAEITQTVKRVVDKLLHAPTVRVKQLAAEPGGAGYADALRTLFDLDQETVASVSRAENSTEKNRGPA.

Substrate is bound by residues 49–52 (TCNR), S109, 114–116 (EGQ), and Q120. C50 (nucleophile) is an active-site residue. 192 to 197 (GAGSMS) provides a ligand contact to NADP(+). The interval 292 to 416 (PAVEDTAVQE…AEAPRPQPVL (125 aa)) is insert.

Belongs to the glutamyl-tRNA reductase family. Homodimer.

It catalyses the reaction (S)-4-amino-5-oxopentanoate + tRNA(Glu) + NADP(+) = L-glutamyl-tRNA(Glu) + NADPH + H(+). The protein operates within porphyrin-containing compound metabolism; protoporphyrin-IX biosynthesis; 5-aminolevulinate from L-glutamyl-tRNA(Glu): step 1/2. In terms of biological role, catalyzes the NADPH-dependent reduction of glutamyl-tRNA(Glu) to glutamate 1-semialdehyde (GSA). This chain is Glutamyl-tRNA reductase, found in Streptomyces coelicolor (strain ATCC BAA-471 / A3(2) / M145).